The chain runs to 355 residues: UDP-N-acetylglucosamine--N-acetylmuramyl-(pentapeptide) pyrophosphoryl-undecaprenol N-acetylglucosamine transferase (355 aa).

UDP-N-acetyl-alpha-D-glucosamine-binding positions include 15–17 (TGG), N127, R163, S191, I244, 263–268 (ALTVSE), and Q288.

This sequence belongs to the glycosyltransferase 28 family. MurG subfamily.

Its subcellular location is the cell inner membrane. The catalysed reaction is di-trans,octa-cis-undecaprenyl diphospho-N-acetyl-alpha-D-muramoyl-L-alanyl-D-glutamyl-meso-2,6-diaminopimeloyl-D-alanyl-D-alanine + UDP-N-acetyl-alpha-D-glucosamine = di-trans,octa-cis-undecaprenyl diphospho-[N-acetyl-alpha-D-glucosaminyl-(1-&gt;4)]-N-acetyl-alpha-D-muramoyl-L-alanyl-D-glutamyl-meso-2,6-diaminopimeloyl-D-alanyl-D-alanine + UDP + H(+). It functions in the pathway cell wall biogenesis; peptidoglycan biosynthesis. Its function is as follows. Cell wall formation. Catalyzes the transfer of a GlcNAc subunit on undecaprenyl-pyrophosphoryl-MurNAc-pentapeptide (lipid intermediate I) to form undecaprenyl-pyrophosphoryl-MurNAc-(pentapeptide)GlcNAc (lipid intermediate II). The protein is UDP-N-acetylglucosamine--N-acetylmuramyl-(pentapeptide) pyrophosphoryl-undecaprenol N-acetylglucosamine transferase of Shigella boydii serotype 18 (strain CDC 3083-94 / BS512).